Consider the following 124-residue polypeptide: uncharacterized protein (124 aa).

The helical transmembrane segment at 13 to 33 (IIFMALYFVITGIVIRLIGYS) threads the bilayer.

It localises to the membrane. This is an uncharacterized protein from Bacillus anthracis.